The following is a 290-amino-acid chain: Eukaryotic translation initiation factor 3 subunit G (290 aa).

The segment at 1-34 is disordered; the sequence is MSRLGNRAADWADDEEFDDPSALPAQQVTTNKDG. Residues 210-288 enclose the RRM domain; the sequence is ATLRVTNVSE…LILRVEFAKR (79 aa).

This sequence belongs to the eIF-3 subunit G family. In terms of assembly, component of the eukaryotic translation initiation factor 3 (eIF-3) complex.

Its subcellular location is the cytoplasm. Functionally, RNA-binding component of the eukaryotic translation initiation factor 3 (eIF-3) complex, which is involved in protein synthesis of a specialized repertoire of mRNAs and, together with other initiation factors, stimulates binding of mRNA and methionyl-tRNAi to the 40S ribosome. The eIF-3 complex specifically targets and initiates translation of a subset of mRNAs involved in cell proliferation. This subunit can bind 18S rRNA. This Neosartorya fischeri (strain ATCC 1020 / DSM 3700 / CBS 544.65 / FGSC A1164 / JCM 1740 / NRRL 181 / WB 181) (Aspergillus fischerianus) protein is Eukaryotic translation initiation factor 3 subunit G.